We begin with the raw amino-acid sequence, 564 residues long: Tripeptidyl-peptidase 1 (564 aa).

The first 19 residues, 1–19, serve as a signal peptide directing secretion; it reads MGLQACLLGLFALILSGKC. Positions 20-195 are cleaved as a propeptide — removed in mature form; it reads SYSPEPDQRR…PEPQVTGTVG (176 aa). An intrachain disulfide couples Cys111 to Cys122. A Peptidase S53 domain is found at 199-564; the sequence is GVTPSVIRKR…PALPKTLLNP (366 aa). N-linked (GlcNAc...) asparagine glycans are attached at residues Asn210 and Asn222. Residues Glu272 and Asp276 each act as charge relay system in the active site. Residues Asn286, Asn313, and Asn443 are each glycosylated (N-linked (GlcNAc...) asparagine). Intrachain disulfides connect Cys365/Cys527 and Cys523/Cys538. Ser475 serves as the catalytic Charge relay system. Residues Asp518 and Val519 each coordinate Ca(2+). Residues Gly540, Gly542, and Asp544 each contribute to the Ca(2+) site.

Monomer. Interacts with CLN5. Interacts with CLN3. Requires Ca(2+) as cofactor. Activated by autocatalytic proteolytical processing upon acidification. N-glycosylation is required for processing and activity.

The protein resides in the lysosome. The protein localises to the melanosome. It carries out the reaction Release of an N-terminal tripeptide from a polypeptide, but also has endopeptidase activity.. Its function is as follows. Lysosomal serine protease with tripeptidyl-peptidase I activity. May act as a non-specific lysosomal peptidase which generates tripeptides from the breakdown products produced by lysosomal proteinases. Requires substrates with an unsubstituted N-terminus. This Pongo abelii (Sumatran orangutan) protein is Tripeptidyl-peptidase 1 (TPP1).